The chain runs to 279 residues: Protein FAM151B (279 aa).

This sequence belongs to the menorin family.

Essential for survival of retinal photoreceptor cells. In Mus musculus (Mouse), this protein is Protein FAM151B (Fam151b).